A 175-amino-acid polypeptide reads, in one-letter code: MSIKQYSQEQLKQMALVEIAHEIFSEHKKPVPFQELLNEMISLLGVTKEELGDRIAQFYTDLNIDGRFIALSDQTWGLRSWYPYDQLDEETQPTVKAKKKKAKKVVEEDLDLDEFEEVDEDDIDLDEIEEDIDLEADSFDDEDIDEEDDDELEIEDEMIEEDEEDYDDEEEDRKD.

Residues Met14–Trp81 enclose the HTH HARE-type domain. The segment at Leu110–Asp175 is disordered.

It belongs to the RpoE family. RNAP is composed of a core of 2 alpha, a beta and a beta' subunits. The core is associated with a delta subunit and one of several sigma factors.

Functionally, participates in both the initiation and recycling phases of transcription. In the presence of the delta subunit, RNAP displays an increased specificity of transcription, a decreased affinity for nucleic acids, and an increased efficiency of RNA synthesis because of enhanced recycling. The chain is Probable DNA-directed RNA polymerase subunit delta from Bacillus velezensis (strain DSM 23117 / BGSC 10A6 / LMG 26770 / FZB42) (Bacillus amyloliquefaciens subsp. plantarum).